Consider the following 28-residue polypeptide: Conotoxin Cal6.43b (28 aa).

Disulfide bonds link C3/C13, C7/C19, and C12/C25.

Expressed by the venom duct.

It is found in the secreted. In terms of biological role, probable neurotoxin with unknown target. Possibly targets ion channels. The protein is Conotoxin Cal6.43b of Californiconus californicus (California cone).